Reading from the N-terminus, the 309-residue chain is Olfactory receptor 1A1 (309 aa).

Residues 1–25 lie on the Extracellular side of the membrane; that stretch reads MRENNQSSTLEFILLGVTGQQEQED. An N-linked (GlcNAc...) asparagine glycan is attached at asparagine 5. The chain crosses the membrane as a helical span at residues 26–49; that stretch reads FFYILFLFIYPITLIGNLLIVLAI. Over 50 to 57 the chain is Cytoplasmic; that stretch reads CSDVHLHN. Residues 58-79 form a helical membrane-spanning segment; sequence PMYFLLANLSLVDIFFSSVTIP. Topologically, residues 80–100 are extracellular; sequence KMLANHLSGSKSISFGGCLTQ. Cysteine 97 and cysteine 189 are disulfide-bonded. A helical membrane pass occupies residues 101–120; sequence MYFMIDLGNTDSYTLAAMAY. Over 121–139 the chain is Cytoplasmic; sequence DRAVAISRPLHYTTIMSPR. The chain crosses the membrane as a helical span at residues 140-158; it reads SCIWLIAGSWVIGNANALP. At 159 to 195 the chain is on the extracellular side; that stretch reads HTLLTASLSFCGNQEVANFYCDITPLLKLSCSDIHFH. The chain crosses the membrane as a helical span at residues 196–218; the sequence is VKMMYLGVGIFSVPLLCIIVSYI. Topologically, residues 219–235 are cytoplasmic; sequence RVFSTVFQVPSTKGVLK. Residues 236–258 traverse the membrane as a helical segment; it reads AFSTCGSHLTVVSLYYGTVMGMY. Residues 259-270 are Extracellular-facing; sequence FRPLTNYSLKDA. N-linked (GlcNAc...) asparagine glycosylation occurs at asparagine 264. A helical membrane pass occupies residues 271 to 290; sequence VITVMCTAVTPMLNPFIYSL. The Cytoplasmic portion of the chain corresponds to 291 to 309; the sequence is RNRDMKAALQKLFNKRISS.

The protein belongs to the G-protein coupled receptor 1 family.

Its subcellular location is the cell membrane. Odorant receptor. In Gorilla gorilla gorilla (Western lowland gorilla), this protein is Olfactory receptor 1A1 (OR1A1).